A 103-amino-acid polypeptide reads, in one-letter code: Small ribosomal subunit protein uS10 (103 aa).

This sequence belongs to the universal ribosomal protein uS10 family. Part of the 30S ribosomal subunit.

In terms of biological role, involved in the binding of tRNA to the ribosomes. The chain is Small ribosomal subunit protein uS10 from Neisseria gonorrhoeae (strain ATCC 700825 / FA 1090).